Reading from the N-terminus, the 293-residue chain is Ethanolamine ammonia-lyase small subunit (293 aa).

Adenosylcob(III)alamin-binding residues include Val-207 and Glu-228.

This sequence belongs to the EutC family. As to quaternary structure, the basic unit is a heterodimer which dimerizes to form tetramers. The heterotetramers trimerize; 6 large subunits form a core ring with 6 small subunits projecting outwards. Adenosylcob(III)alamin is required as a cofactor.

The protein localises to the bacterial microcompartment. It catalyses the reaction ethanolamine = acetaldehyde + NH4(+). It functions in the pathway amine and polyamine degradation; ethanolamine degradation. Catalyzes the deamination of various vicinal amino-alcohols to oxo compounds. Allows this organism to utilize ethanolamine as the sole source of nitrogen and carbon in the presence of external vitamin B12. This chain is Ethanolamine ammonia-lyase small subunit, found in Listeria monocytogenes serotype 4b (strain CLIP80459).